The primary structure comprises 328 residues: Anthranilate phosphoribosyltransferase (328 aa).

5-phospho-alpha-D-ribose 1-diphosphate is bound by residues G79, G82–D83, T87, N89–T92, K107–S115, and S119. G79 provides a ligand contact to anthranilate. S91 serves as a coordination point for Mg(2+). An anthranilate-binding site is contributed by N110. Residue R165 participates in anthranilate binding. Mg(2+) contacts are provided by D223 and E224.

The protein belongs to the anthranilate phosphoribosyltransferase family. Homodimer. It depends on Mg(2+) as a cofactor.

It carries out the reaction N-(5-phospho-beta-D-ribosyl)anthranilate + diphosphate = 5-phospho-alpha-D-ribose 1-diphosphate + anthranilate. It functions in the pathway amino-acid biosynthesis; L-tryptophan biosynthesis; L-tryptophan from chorismate: step 2/5. Catalyzes the transfer of the phosphoribosyl group of 5-phosphorylribose-1-pyrophosphate (PRPP) to anthranilate to yield N-(5'-phosphoribosyl)-anthranilate (PRA). This is Anthranilate phosphoribosyltransferase from Cytophaga hutchinsonii (strain ATCC 33406 / DSM 1761 / CIP 103989 / NBRC 15051 / NCIMB 9469 / D465).